The primary structure comprises 608 residues: Cilia- and flagella-associated protein 100 (608 aa).

The segment covering 1-17 has biased composition (polar residues); that stretch reads MSETLSNIVSKNMTNDK. The segment at 1–57 is disordered; sequence MSETLSNIVSKNMTNDKNSLESMNISSSSSAEENPKKQAKKXKERGPDPSANPFHLS. Residues 20-32 show a composition bias toward low complexity; that stretch reads LESMNISSSSSAE. 2 coiled-coil regions span residues 164–196 and 230–257; these read TLDC…LAKD and LEIR…QHYK. Disordered stretches follow at residues 291-320 and 339-377; these read ASKD…AKEG and LSSP…GEEP. The segment covering 339–361 has biased composition (low complexity); sequence LSSPQQGSQPSESSGGNSRGSNS. Coiled-coil stretches lie at residues 385-435 and 500-575; these read QQLL…QLKQ and TVQM…RGRT.

This sequence belongs to the CFAP100 family.

The protein localises to the cytoplasm. It is found in the cytoskeleton. Its subcellular location is the cilium axoneme. In terms of biological role, may play a role in ciliary/flagellar motility by regulating the assembly and the activity of axonemal inner dynein arm. The chain is Cilia- and flagella-associated protein 100 from Macaca fascicularis (Crab-eating macaque).